Reading from the N-terminus, the 193-residue chain is Dual-action ribosomal maturation protein DarP (193 aa).

Basic and acidic residues predominate over residues 1–10; the sequence is MRGRDEETGE. Disordered stretches follow at residues 1–20 and 171–193; these read MRGR…SQQR and QEQG…EDDE. Residues 178-193 are compositionally biased toward acidic residues; that stretch reads GDSELEDGESASEDDE.

Belongs to the DarP family.

The protein resides in the cytoplasm. In terms of biological role, member of a network of 50S ribosomal subunit biogenesis factors which assembles along the 30S-50S interface, preventing incorrect 23S rRNA structures from forming. Promotes peptidyl transferase center (PTC) maturation. The protein is Dual-action ribosomal maturation protein DarP of Xanthomonas axonopodis pv. citri (strain 306).